The chain runs to 316 residues: BTB/POZ domain-containing adapter for CUL3-mediated RhoA degradation protein 2 (316 aa).

A BTB domain is found at 28–96; sequence KYVQLNVGGS…LRDDTVTLPQ (69 aa). Over residues 268–279 the composition is skewed to polar residues; sequence EATSRSRSQASP. The disordered stretch occupies residues 268–287; the sequence is EATSRSRSQASPSEDEDTFE. At S278 the chain carries Phosphoserine. At S280 the chain carries Phosphoserine; by CK2.

The protein belongs to the BACURD family. Component of the BCR(TNFAIP1) E3 ubiquitin ligase complex, at least composed of CUL3, TNFAIP1/BACURD2 and RBX1. Interacts with RHOA; with a preference for RhoA-GDP. Interacts with RHOB. Interacts with CSNK2B. Interacts with PCNA. Phosphorylation at Ser-280 by CK2 facilitates the nucleus localization and increases interaction with PCNA.

It is found in the cytoplasm. Its subcellular location is the nucleus. The protein localises to the endosome. Its pathway is protein modification; protein ubiquitination. In terms of biological role, substrate-specific adapter of a BCR (BTB-CUL3-RBX1) E3 ubiquitin-protein ligase complex involved in regulation of cytoskeleton structure. The BCR(TNFAIP1) E3 ubiquitin ligase complex mediates the ubiquitination of RHOA, leading to its degradation by the proteasome, thereby regulating the actin cytoskeleton and cell migration. Its interaction with RHOB may regulate apoptosis. May enhance the PCNA-dependent DNA polymerase delta activity. This is BTB/POZ domain-containing adapter for CUL3-mediated RhoA degradation protein 2 (Tnfaip1) from Rattus norvegicus (Rat).